The chain runs to 680 residues: GTPase Obg (680 aa).

The 159-residue stretch at 2–160 (DQFIDVVSFE…LNIRLEVKLI (159 aa)) folds into the Obg domain. The OBG-type G domain occupies 161-336 (ADIGLVGMPN…LDGDMLDKVT (176 aa)). Residues 167 to 174 (GMPNTGKS), 192 to 196 (FTTLT), 214 to 217 (DIPG), 281 to 284 (NKTD), and 317 to 319 (PEI) each bind GTP. Mg(2+)-binding residues include Ser174 and Thr194. The tract at residues 371 to 680 (TKRVFGPVVS…NGVLSYAVNI (310 aa)) is radical SAM domain. The region spanning 383–613 (LGNSLGIDVI…IEIDVPSVSD (231 aa)) is the Radical SAM core domain. Cys397, Cys401, and Cys404 together coordinate [4Fe-4S] cluster.

This sequence belongs to the TRAFAC class OBG-HflX-like GTPase superfamily. OBG GTPase family. As to quaternary structure, monomer. It depends on Mg(2+) as a cofactor. Requires [4Fe-4S] cluster as cofactor.

Its subcellular location is the cytoplasm. In terms of biological role, an essential GTPase which binds GTP, GDP and possibly (p)ppGpp with moderate affinity, with high nucleotide exchange rates and a fairly low GTP hydrolysis rate. Plays a role in control of the cell cycle, stress response, ribosome biogenesis and in those bacteria that undergo differentiation, in morphogenesis control. This is GTPase Obg from Brachyspira hyodysenteriae (strain ATCC 49526 / WA1).